We begin with the raw amino-acid sequence, 315 residues long: Mycothiol acetyltransferase (315 aa).

N-acetyltransferase domains are found at residues 8 to 145 (VETS…LPLD) and 163 to 315 (VSLR…DATA). Glu-39 contributes to the 1D-myo-inositol 2-(L-cysteinylamino)-2-deoxy-alpha-D-glucopyranoside binding site. Residues 81-83 (LVV) and 89-94 (HHGVGT) contribute to the acetyl-CoA site. Positions 190, 229, and 243 each coordinate 1D-myo-inositol 2-(L-cysteinylamino)-2-deoxy-alpha-D-glucopyranoside. 247–249 (LGV) is an acetyl-CoA binding site. Tyr-281 provides a ligand contact to 1D-myo-inositol 2-(L-cysteinylamino)-2-deoxy-alpha-D-glucopyranoside. 286 to 291 (NTVAIR) contacts acetyl-CoA.

It belongs to the acetyltransferase family. MshD subfamily. As to quaternary structure, monomer.

The catalysed reaction is 1D-myo-inositol 2-(L-cysteinylamino)-2-deoxy-alpha-D-glucopyranoside + acetyl-CoA = mycothiol + CoA + H(+). Catalyzes the transfer of acetyl from acetyl-CoA to desacetylmycothiol (Cys-GlcN-Ins) to form mycothiol. The sequence is that of Mycothiol acetyltransferase from Sanguibacter keddieii (strain ATCC 51767 / DSM 10542 / NCFB 3025 / ST-74).